We begin with the raw amino-acid sequence, 629 residues long: tRNA uridine 5-carboxymethylaminomethyl modification enzyme MnmG (629 aa).

FAD contacts are provided by residues 13–18 (GGGHAG), V125, and S180. 273-287 (GPRYCPSIEDKVMRF) lines the NAD(+) pocket. Q370 contributes to the FAD binding site.

It belongs to the MnmG family. In terms of assembly, homodimer. Heterotetramer of two MnmE and two MnmG subunits. It depends on FAD as a cofactor.

Its subcellular location is the cytoplasm. NAD-binding protein involved in the addition of a carboxymethylaminomethyl (cmnm) group at the wobble position (U34) of certain tRNAs, forming tRNA-cmnm(5)s(2)U34. In Cronobacter sakazakii (strain ATCC BAA-894) (Enterobacter sakazakii), this protein is tRNA uridine 5-carboxymethylaminomethyl modification enzyme MnmG.